Reading from the N-terminus, the 157-residue chain is Protein Smg homolog (157 aa).

It belongs to the Smg family.

The sequence is that of Protein Smg homolog from Stenotrophomonas maltophilia (strain R551-3).